The following is a 124-amino-acid chain: Large ribosomal subunit protein bL12 (124 aa).

The segment at 93–124 (GAPSTVKEGASKDEAEEAKKKLEEAGASVELK) is disordered. Positions 101 to 116 (GASKDEAEEAKKKLEE) are enriched in basic and acidic residues.

It belongs to the bacterial ribosomal protein bL12 family. As to quaternary structure, homodimer. Part of the ribosomal stalk of the 50S ribosomal subunit. Forms a multimeric L10(L12)X complex, where L10 forms an elongated spine to which 2 to 4 L12 dimers bind in a sequential fashion. Binds GTP-bound translation factors.

In terms of biological role, forms part of the ribosomal stalk which helps the ribosome interact with GTP-bound translation factors. Is thus essential for accurate translation. The protein is Large ribosomal subunit protein bL12 of Marinobacter nauticus (strain ATCC 700491 / DSM 11845 / VT8) (Marinobacter aquaeolei).